A 132-amino-acid polypeptide reads, in one-letter code: Vacuolar protein sorting-associated protein 55 homolog (132 aa).

4 consecutive transmembrane segments (helical) span residues 7–27 (VAAL…GCAL), 32–52 (TWTP…LLIA), 68–88 (LALF…IVLA), and 98–118 (CFLV…YFYL).

It belongs to the OB-RGRP/VPS55 family.

The protein localises to the endosome membrane. Involved in endosomal protein transport. The protein is Vacuolar protein sorting-associated protein 55 homolog of Caenorhabditis elegans.